A 548-amino-acid chain; its full sequence is Chaperonin GroEL (548 aa).

Residues 30-33 (TLGP), K51, 87-91 (DGTTT), G415, 479-481 (NAA), and D495 each bind ATP.

Belongs to the chaperonin (HSP60) family. Forms a cylinder of 14 subunits composed of two heptameric rings stacked back-to-back. Interacts with the co-chaperonin GroES.

The protein resides in the cytoplasm. The catalysed reaction is ATP + H2O + a folded polypeptide = ADP + phosphate + an unfolded polypeptide.. Functionally, together with its co-chaperonin GroES, plays an essential role in assisting protein folding. The GroEL-GroES system forms a nano-cage that allows encapsulation of the non-native substrate proteins and provides a physical environment optimized to promote and accelerate protein folding. The sequence is that of Chaperonin GroEL from Ectopseudomonas mendocina (strain ymp) (Pseudomonas mendocina).